Here is a 274-residue protein sequence, read N- to C-terminus: 3-methyl-2-oxobutanoate hydroxymethyltransferase (274 aa).

Residues D49 and D88 each coordinate Mg(2+). 3-methyl-2-oxobutanoate contacts are provided by residues 49-50 (DS), D88, and K118. Mg(2+) is bound at residue E120. E187 functions as the Proton acceptor in the catalytic mechanism.

It belongs to the PanB family. In terms of assembly, homodecamer; pentamer of dimers. It depends on Mg(2+) as a cofactor.

The protein resides in the cytoplasm. The catalysed reaction is 3-methyl-2-oxobutanoate + (6R)-5,10-methylene-5,6,7,8-tetrahydrofolate + H2O = 2-dehydropantoate + (6S)-5,6,7,8-tetrahydrofolate. It functions in the pathway cofactor biosynthesis; (R)-pantothenate biosynthesis; (R)-pantoate from 3-methyl-2-oxobutanoate: step 1/2. In terms of biological role, catalyzes the reversible reaction in which hydroxymethyl group from 5,10-methylenetetrahydrofolate is transferred onto alpha-ketoisovalerate to form ketopantoate. This is 3-methyl-2-oxobutanoate hydroxymethyltransferase from Rhodopseudomonas palustris (strain TIE-1).